Reading from the N-terminus, the 508-residue chain is Protein disulfide-isomerase (508 aa).

A signal peptide spans 1 to 17 (MLRRALLCLAVAALVRA). The region spanning 18-134 (DAPEEEDHVL…IVNWLKKRTG (117 aa)) is the Thioredoxin 1 domain. Catalysis depends on nucleophile residues Cys53 and Cys56. A disulfide bond links Cys53 and Cys56. Lys200 bears the N6-acetyllysine mark. N6-succinyllysine is present on residues Lys222 and Lys271. A Phosphoserine modification is found at Ser331. A Thioredoxin 2 domain is found at 349 to 475 (GKIKPHLMSQ…FKKFLESGGQ (127 aa)). The residue at position 357 (Ser357) is a Phosphoserine; by FAM20C. Catalysis depends on nucleophile residues Cys397 and Cys400. A disulfide bond links Cys397 and Cys400. Ser427 is modified (phosphoserine). Positions 471-508 (ESGGQDGAGDDDDLEDLEEAEEPDMEEDDDQKAVKDEL) are disordered. Over residues 478–500 (AGDDDDLEDLEEAEEPDMEEDDD) the composition is skewed to acidic residues. The Prevents secretion from ER signature appears at 505–508 (KDEL).

The protein belongs to the protein disulfide isomerase family. In terms of assembly, heterodimer; heterodimerizes with the protein microsomal triglyceride transfer MTTP. Homodimer. Monomers and homotetramers may also occur. Interacts with P4HA2, forming a heterotetramer consisting of 2 alpha subunits (P4HA2) and 2 beta (P4HB), where P4HB plays the role of a structural subunit; this tetramer catalyzes the formation of 4-hydroxyproline in collagen. Also constitutes the structural subunit of the microsomal triacylglycerol transfer protein MTTP in mammalian cells. Stabilizes both enzymes and retain them in the ER without contributing to the catalytic activity. Binds UBQLN1. Interacts with ERO1B. Binds to CD4, and upon HIV-1 binding to the cell membrane, is part of a P4HB/PDI-CD4-CXCR4-gp120 complex. Interacts with ILDR2. Interacts with ERN1/IRE1A (via N-terminus); the interaction is enhanced by phosphorylation of P4HB by FAM20C in response to endoplasmic reticulum stress and results in attenuation of ERN1 activity. Phosphorylation of Ser-357 by FAM20C is induced by endoplasmic reticulum stress and results in a functional switch from oxidoreductase to molecular chaperone. It also promotes interaction with ERN1.

It localises to the endoplasmic reticulum. The protein resides in the endoplasmic reticulum lumen. It is found in the melanosome. The protein localises to the cell membrane. It carries out the reaction Catalyzes the rearrangement of -S-S- bonds in proteins.. Functionally, this multifunctional protein catalyzes the formation, breakage and rearrangement of disulfide bonds. At the cell surface, seems to act as a reductase that cleaves disulfide bonds of proteins attached to the cell. May therefore cause structural modifications of exofacial proteins. Inside the cell, seems to form/rearrange disulfide bonds of nascent proteins. At high concentrations and following phosphorylation by FAM20C, functions as a chaperone that inhibits aggregation of misfolded proteins. At low concentrations, facilitates aggregation (anti-chaperone activity). May be involved with other chaperones in the structural modification of the TG precursor in hormone biogenesis. Also acts as a structural subunit of various enzymes such as prolyl 4-hydroxylase and microsomal triacylglycerol transfer protein MTTP. Receptor for LGALS9; the interaction retains P4HB at the cell surface of Th2 T helper cells, increasing disulfide reductase activity at the plasma membrane, altering the plasma membrane redox state and enhancing cell migration. This is Protein disulfide-isomerase (P4HB) from Homo sapiens (Human).